The sequence spans 294 residues: Protoheme IX farnesyltransferase (294 aa).

Transmembrane regions (helical) follow at residues Leu8–Ala28, Tyr35–Leu55, Ile81–Leu101, Val107–Trp127, Ile133–Ala153, Leu163–Leu183, Met209–Met226, Ser230–Tyr252, and Phe266–Leu286.

It belongs to the UbiA prenyltransferase family. Protoheme IX farnesyltransferase subfamily.

It is found in the cell inner membrane. It catalyses the reaction heme b + (2E,6E)-farnesyl diphosphate + H2O = Fe(II)-heme o + diphosphate. It functions in the pathway porphyrin-containing compound metabolism; heme O biosynthesis; heme O from protoheme: step 1/1. In terms of biological role, converts heme B (protoheme IX) to heme O by substitution of the vinyl group on carbon 2 of heme B porphyrin ring with a hydroxyethyl farnesyl side group. The sequence is that of Protoheme IX farnesyltransferase from Blochmanniella pennsylvanica (strain BPEN).